Consider the following 293-residue polypeptide: MPWIQLKIDTDNQHADALSDLLMEEGSLSITLEDGKDTPIYEPTLGETPLWNHTVLTALFEADRDLAIVVEQLKLQPYLGEDFSYKIEQVEDKDWEREWMDNFHPIKFGERLWICPSWREIPDPDAVNIILDPGLAFGTGTHPTTALCLEWLDSLDFADKEVIDFGCGSGILAVAALKLGATKVTGIDIDYQAIDASKANAERNGVEDQLALFLPEDQPKDLQADILVANILAGPLRELAPLIAEKVKTGGQLALSGLLKEQAEEVAEFYTQWFDMDEPAHKEDWSRLTGIRK.

Residues T145, G166, D188, and N230 each coordinate S-adenosyl-L-methionine.

This sequence belongs to the methyltransferase superfamily. PrmA family.

Its subcellular location is the cytoplasm. It carries out the reaction L-lysyl-[protein] + 3 S-adenosyl-L-methionine = N(6),N(6),N(6)-trimethyl-L-lysyl-[protein] + 3 S-adenosyl-L-homocysteine + 3 H(+). Methylates ribosomal protein L11. The chain is Ribosomal protein L11 methyltransferase from Shewanella sediminis (strain HAW-EB3).